The sequence spans 210 residues: Probable nicotinate-nucleotide adenylyltransferase (210 aa).

The protein belongs to the NadD family.

It carries out the reaction nicotinate beta-D-ribonucleotide + ATP + H(+) = deamido-NAD(+) + diphosphate. The protein operates within cofactor biosynthesis; NAD(+) biosynthesis; deamido-NAD(+) from nicotinate D-ribonucleotide: step 1/1. Catalyzes the reversible adenylation of nicotinate mononucleotide (NaMN) to nicotinic acid adenine dinucleotide (NaAD). This Streptococcus pyogenes serotype M18 (strain MGAS8232) protein is Probable nicotinate-nucleotide adenylyltransferase.